The chain runs to 234 residues: Phosphatidylcholine synthase (234 aa).

Over 1 to 3 (MKN) the chain is Cytoplasmic. The chain crosses the membrane as a helical span at residues 4 to 24 (INLILAWLVHIFTASGLIVGL). Over 25 to 26 (YS) the chain is Periplasmic. A helical transmembrane segment spans residues 27-47 (IISIVNGNYSLLLKLTVIGLI). The Cytoplasmic segment spans residues 48–75 (IDGIDGTMARKLKVKELIPEIDGTLLDN). Residues 76-96 (ITDYINYTFIPVIFFYLGEFI) traverse the membrane as a helical segment. Residues 97-98 (EE) are Periplasmic-facing. The helical transmembrane segment at 99-116 (KYKVAICIGILLSSAYQF) threads the bilayer. At 117–126 (SRTDAKTNDN) the chain is on the cytoplasmic side. Residues 127–147 (YFRGFPSLWNLFVILNIIFKM) traverse the membrane as a helical segment. Residues 148-149 (EQ) lie on the Periplasmic side of the membrane. The chain crosses the membrane as a helical span at residues 150 to 170 (ITNLITMSICIITSFIPIKFI). Topologically, residues 171-180 (YPSKTKELRK) are cytoplasmic. Residues 181–201 (ITIPITIISCLIFVVSIFSEL) form a helical membrane-spanning segment. Residues 202–207 (STTALK) are Periplasmic-facing. A helical membrane pass occupies residues 208–228 (MAKTVLILYFAYLTLASIYLT). Residues 229–234 (YKTRNR) lie on the Cytoplasmic side of the membrane.

This sequence belongs to the CDP-alcohol phosphatidyltransferase class-I family. The cofactor is Mn(2+).

The protein localises to the cell inner membrane. It carries out the reaction a CDP-1,2-diacyl-sn-glycerol + choline = a 1,2-diacyl-sn-glycero-3-phosphocholine + CMP + H(+). Condenses choline with CDP-diglyceride to produce phosphatidylcholine and CMP. This is Phosphatidylcholine synthase from Borreliella burgdorferi (strain ATCC 35210 / DSM 4680 / CIP 102532 / B31) (Borrelia burgdorferi).